We begin with the raw amino-acid sequence, 202 residues long: GTP cyclohydrolase 1 (202 aa).

Residues cysteine 93, histidine 96, and cysteine 164 each contribute to the Zn(2+) site.

This sequence belongs to the GTP cyclohydrolase I family. As to quaternary structure, toroid-shaped homodecamer, composed of two pentamers of five dimers.

The catalysed reaction is GTP + H2O = 7,8-dihydroneopterin 3'-triphosphate + formate + H(+). Its pathway is cofactor biosynthesis; 7,8-dihydroneopterin triphosphate biosynthesis; 7,8-dihydroneopterin triphosphate from GTP: step 1/1. The sequence is that of GTP cyclohydrolase 1 from Pelagibacter ubique (strain HTCC1062).